We begin with the raw amino-acid sequence, 874 residues long: MKTSELRQKFLKFFETKGHTVVRSSSLVPHDDPTLLFTNAGMNQFKDVFLGFDKRPYSRATTAQKCVRAGGKHNDLENVGYTARHHTFFEMMGNFSFGDYFKRDAIHFAWEFLTSPEWLNIPKDKLLATVYAEDDEAYNIWLNEIGMPSERIVRIGDNKGAKYVSDNFWQMGDTGPCGPCSEIFYDHGEEIWGGIPGSPEEDGDRWIEIWNCVFMQFNRDEQGNMNPLPKPSVDTGMGLERMAAVMQHVHSNYEIDLFQDLLKAVARETGAAFSMDEPSLKVIADHIRSCSFLIADGVLPSNEGRGYVLRRIIRRAVRHGYKLGQSKPFFHKLVADLVKEMGGAYPELKEKQAQIEEALKNEESRFAQTLETGMALLENALAKGGKTLDGEIIFKLYDTYGFPYDLTADICRERNIELDEAGFEREMEAQRARARAAQSFKANAQLPYDGQDTEFKGYSERQTESKVLALYKDGEQVNELNEGDSGAVVIDFTPFYAESGGQVGDVGYIFSSENRFEVRDTQKIKAAVFGQFGVQTSGRLKVGDSVTAKVDDEIRNANMRNHSATHLMHKALRDVLGGHVEQKGSLVTAESTRFDISHPQAVTAEEIAEVERRVNEAVLANVAVNAAIMSMEDAQKTGAMMLFGEKYGEEVRVLQMGGFSTELCGGTHVSRTGDIGLFKIISEGGIAAGVRRIEAITGLNALKWAQEQERLVKDIIAETKAQTEKDVLAKIQAGAAHAKALEKELARAKAELAVHAGAKLLDDAKDLGAAKLVAAQIEADAAALREIVTDLTGKSDNAVILLAAVNDGKVSLCAGVSKPLTGKVKAGDLVKFAAEQVGGKGGGRPDLAQAGGTDAGKLPEMLVSVESWLCQKLS.

Positions 562, 566, 664, and 668 each coordinate Zn(2+).

The protein belongs to the class-II aminoacyl-tRNA synthetase family. Requires Zn(2+) as cofactor.

Its subcellular location is the cytoplasm. The enzyme catalyses tRNA(Ala) + L-alanine + ATP = L-alanyl-tRNA(Ala) + AMP + diphosphate. Functionally, catalyzes the attachment of alanine to tRNA(Ala) in a two-step reaction: alanine is first activated by ATP to form Ala-AMP and then transferred to the acceptor end of tRNA(Ala). Also edits incorrectly charged Ser-tRNA(Ala) and Gly-tRNA(Ala) via its editing domain. In Neisseria meningitidis serogroup A / serotype 4A (strain DSM 15465 / Z2491), this protein is Alanine--tRNA ligase.